We begin with the raw amino-acid sequence, 335 residues long: Protein MET1, chloroplastic (335 aa).

Residues 1–18 (MSLAPSSYPSLYSSPSLP) are compositionally biased toward low complexity. 2 disordered regions span residues 1–29 (MSLAPSSYPSLYSSPSLPRTQQTKQNPSL) and 66–88 (SETESSAKAEAGGDGEEEEKYET). The transit peptide at 1 to 73 (MSLAPSSYPS…KASETESSAK (73 aa)) directs the protein to the chloroplast. A compositionally biased stretch (polar residues) spans 19–29 (RTQQTKQNPSL). Residues 78-88 (GDGEEEEKYET) show a composition bias toward acidic residues. The region spanning 97–136 (YGLKFRKGRDGGTYIDAILPGGSADKTGKFTVGDRVIATS) is the PDZ domain. TPR repeat units follow at residues 217-250 (REKDLREGLQFSKNGKYEEALERFESVLGSKPTP), 254-287 (SVASYNVACCYSKLNQVQAGLSALEEALKSGYED), and 289-323 (KRIRSDPDLETLRKSKDFDPLLKQFDESFINESAI).

As to quaternary structure, interacts directly with stromal loops of photosystem II (PSII) core components psbB (CP47) and psbC (CP43). Associates with PSII subcomplexes formed during the PSII repair cycle (e.g. PSII dimers, PSII monomers, CP43-less PSII monomerand PSII reaction centers). In terms of processing, phosphorylated rapidly (e.g. within 5 minutes) but transiently at threonine and serine residues after wounding. Expressed in leaves (at protein level). Mostly expressed in leaves, stems and siliques, and, to a lower extent, in flowers and senescent leaves, but not present in roots (at protein level).

The protein resides in the plastid. It is found in the chloroplast membrane. It localises to the chloroplast thylakoid membrane. Functionally, involved in photosystem II supercomplex formation and repair, probably acting as a psbB/psbC chaperone on the stromal side of the membrane. This is Protein MET1, chloroplastic from Arabidopsis thaliana (Mouse-ear cress).